A 786-amino-acid chain; its full sequence is Probable aminopeptidase 1 (786 aa).

Substrate contacts are provided by residues E103 and 235 to 239 (GAMEN). A Zn(2+)-binding site is contributed by H270. Residue E271 is the Proton acceptor of the active site. The Zn(2+) site is built by H274 and E293.

It belongs to the peptidase M1 family. Zn(2+) serves as cofactor.

Its subcellular location is the cytoplasm. In Sulfurisphaera tokodaii (strain DSM 16993 / JCM 10545 / NBRC 100140 / 7) (Sulfolobus tokodaii), this protein is Probable aminopeptidase 1 (ape1).